We begin with the raw amino-acid sequence, 81 residues long: MSHSVKIYDTCIGCTQCVRACPTDVLEMIPWDGCKAKQIASAPRTEDCVGCKRCESACPTDFLSVRVYLWHETTRSMGLAY.

4Fe-4S ferredoxin-type domains are found at residues 2–31 (SHSV…MIPW) and 39–68 (IASA…VRVY). Positions 11, 14, 17, 21, 48, 51, 54, and 58 each coordinate [4Fe-4S] cluster.

The eukaryotic PSI reaction center is composed of at least 11 subunits. The cofactor is [4Fe-4S] cluster.

It localises to the plastid. Its subcellular location is the chloroplast thylakoid membrane. It carries out the reaction reduced [plastocyanin] + hnu + oxidized [2Fe-2S]-[ferredoxin] = oxidized [plastocyanin] + reduced [2Fe-2S]-[ferredoxin]. In terms of biological role, apoprotein for the two 4Fe-4S centers FA and FB of photosystem I (PSI); essential for photochemical activity. FB is the terminal electron acceptor of PSI, donating electrons to ferredoxin. The C-terminus interacts with PsaA/B/D and helps assemble the protein into the PSI complex. Required for binding of PsaD and PsaE to PSI. PSI is a plastocyanin-ferredoxin oxidoreductase, converting photonic excitation into a charge separation, which transfers an electron from the donor P700 chlorophyll pair to the spectroscopically characterized acceptors A0, A1, FX, FA and FB in turn. The protein is Photosystem I iron-sulfur center of Vitis vinifera (Grape).